Here is a 619-residue protein sequence, read N- to C-terminus: Thiohydroximate-O-sulfate sulfur/sulfate-lyase (nitrile-forming) NSP4 (619 aa).

Jacalin-type lectin domains are found at residues 2–142 and 151–292; these read AQKV…YFAP and AKKL…YISL. Kelch repeat units lie at residues 326-374, 379-425, 429-478, 480-524, and 528-583; these read KIYS…VCMV, TLYV…SMAA, NVYV…VVQG, VWVV…ASAA, and HIVI…GWTA. The active-site Proton donor is Arg-386. A (Z)-N-(sulfonatooxy)alkanimidothioate is bound by residues Arg-386, Ser-419, Arg-441, Gly-470, and Val-519. Arg-441 serves as the catalytic Proton donor. Fe(2+)-binding residues include Glu-535, Asp-539, and His-543. Trp-581 serves as a coordination point for a (Z)-N-(sulfonatooxy)alkanimidothioate.

Belongs to the jacalin lectin family. It depends on Fe(2+) as a cofactor. In terms of tissue distribution, mainly expressed in roots, and, to a lower extent, in seedlings and leaves. Observed in seeds.

It carries out the reaction a (Z)-N-(sulfonatooxy)alkanimidothioate = a nitrile + sulfur + sulfate. The enzyme catalyses (Z)-phenyl-N-(sulfonatooxy)methanimidothioate = phenylacetonitrile + sulfur + sulfate. The catalysed reaction is (Z)-N-(sulfonatooxy)prop-2-enimidothioate = but-3-enenitrile + sulfur + sulfate. Functionally, specifier protein that contributes to constitutive and herbivore-induced simple nitrile formation. Promotes simple nitriles, but not epithionitrile or thiocyanate formation. Converts allylglucosinolate and benzylglucosinolate (glucotropaeolin) to their corresponding simple nitriles in the presence of myrosinase. The chain is Thiohydroximate-O-sulfate sulfur/sulfate-lyase (nitrile-forming) NSP4 from Arabidopsis thaliana (Mouse-ear cress).